The primary structure comprises 294 residues: ATP synthase gamma chain (294 aa).

It belongs to the ATPase gamma chain family. As to quaternary structure, F-type ATPases have 2 components, CF(1) - the catalytic core - and CF(0) - the membrane proton channel. CF(1) has five subunits: alpha(3), beta(3), gamma(1), delta(1), epsilon(1). CF(0) has three main subunits: a, b and c.

The protein resides in the cell inner membrane. Its function is as follows. Produces ATP from ADP in the presence of a proton gradient across the membrane. The gamma chain is believed to be important in regulating ATPase activity and the flow of protons through the CF(0) complex. The sequence is that of ATP synthase gamma chain from Campylobacter jejuni subsp. jejuni serotype O:2 (strain ATCC 700819 / NCTC 11168).